The following is a 434-amino-acid chain: uncharacterized protein (434 aa).

An N-terminal signal peptide occupies residues M1 to G17. Transmembrane regions (helical) follow at residues A48 to L68, E70 to A90, Y112 to F132, T141 to V161, W173 to T193, Y206 to V226, Y232 to L252, E271 to Y291, T305 to F325, W344 to L364, A380 to F400, and F404 to I424.

It is found in the membrane. This is an uncharacterized protein from Arabidopsis thaliana (Mouse-ear cress).